The chain runs to 255 residues: 3-alpha-(or 20-beta)-hydroxysteroid dehydrogenase (255 aa).

10 to 34 is an NAD(+) binding site; the sequence is IITGGARGLGAEAARQAVAAGARVV. Ser139 is a substrate binding site. The Proton acceptor role is filled by Tyr152.

This sequence belongs to the short-chain dehydrogenases/reductases (SDR) family. As to quaternary structure, homotetramer.

The enzyme catalyses androstan-3alpha,17beta-diol + NAD(+) = 17beta-hydroxyandrostanone + NADH + H(+). It functions in the pathway lipid metabolism; C21-steroid hormone metabolism. This is 3-alpha-(or 20-beta)-hydroxysteroid dehydrogenase from Streptomyces exfoliatus (Streptomyces hydrogenans).